Here is a 792-residue protein sequence, read N- to C-terminus: Cadherin-11 (792 aa).

A signal peptide spans M1 to A22. The propeptide occupies I23–R53. 5 consecutive Cadherin domains span residues G54–F159, L160–F268, P269–F383, L384–P486, and K487–N608. Over G54 to T613 the chain is Extracellular. N-linked (GlcNAc...) asparagine glycosylation is found at N455, N536, and N594. The chain crosses the membrane as a helical span at residues G614–V634. Residues T635–S792 lie on the Cytoplasmic side of the membrane.

The protein resides in the cell membrane. Functionally, cadherins are calcium-dependent cell adhesion proteins. They preferentially interact with themselves in a homophilic manner in connecting cells; cadherins may thus contribute to the sorting of heterogeneous cell types. Required for proper focal adhesion assembly. Involved in the regulation of cell migration. The protein is Cadherin-11 (CDH11) of Gallus gallus (Chicken).